The chain runs to 198 residues: B9 domain-containing protein 1 (198 aa).

The C2 B9-type domain occupies 8–126 (FLLNVSGQIE…TIPMFVPESS (119 aa)).

This sequence belongs to the B9D family. As to quaternary structure, part of the tectonic-like complex (also named B9 complex).

It is found in the cytoplasm. Its subcellular location is the cytoskeleton. The protein resides in the cilium basal body. Functionally, component of the tectonic-like complex, a complex localized at the transition zone of primary cilia and acting as a barrier that prevents diffusion of transmembrane proteins between the cilia and plasma membranes. Required for ciliogenesis and sonic hedgehog/SHH signaling. The sequence is that of B9 domain-containing protein 1 (b9d1) from Xenopus laevis (African clawed frog).